Here is a 318-residue protein sequence, read N- to C-terminus: uncharacterized protein (318 aa).

The protein to A.aeolicus AA07 and AA11.

This is an uncharacterized protein from Aquifex aeolicus (strain VF5).